Here is a 442-residue protein sequence, read N- to C-terminus: Tubulin beta chain (442 aa).

Q11, E69, S138, G142, T143, G144, N204, and N226 together coordinate GTP. Mg(2+) is bound at residue E69.

Belongs to the tubulin family. As to quaternary structure, dimer of alpha and beta chains. A typical microtubule is a hollow water-filled tube with an outer diameter of 25 nm and an inner diameter of 15 nM. Alpha-beta heterodimers associate head-to-tail to form protofilaments running lengthwise along the microtubule wall with the beta-tubulin subunit facing the microtubule plus end conferring a structural polarity. Microtubules usually have 13 protofilaments but different protofilament numbers can be found in some organisms and specialized cells. It depends on Mg(2+) as a cofactor.

It localises to the cytoplasm. It is found in the cytoskeleton. Its function is as follows. Tubulin is the major constituent of microtubules, a cylinder consisting of laterally associated linear protofilaments composed of alpha- and beta-tubulin heterodimers. Microtubules grow by the addition of GTP-tubulin dimers to the microtubule end, where a stabilizing cap forms. Below the cap, tubulin dimers are in GDP-bound state, owing to GTPase activity of alpha-tubulin. In Trypanosoma cruzi, this protein is Tubulin beta chain.